The chain runs to 460 residues: Hydroxymethylglutaryl-CoA synthase erg13B (460 aa).

Catalysis depends on E86, which acts as the Proton donor/acceptor. The active-site Acyl-thioester intermediate is C120. (3S)-3-hydroxy-3-methylglutaryl-CoA contacts are provided by C120, T162, S212, H263, K272, N340, and S374. Residue H263 is the Proton donor/acceptor of the active site.

This sequence belongs to the thiolase-like superfamily. HMG-CoA synthase family.

It catalyses the reaction acetoacetyl-CoA + acetyl-CoA + H2O = (3S)-3-hydroxy-3-methylglutaryl-CoA + CoA + H(+). It participates in metabolic intermediate biosynthesis; (R)-mevalonate biosynthesis; (R)-mevalonate from acetyl-CoA: step 2/3. In terms of biological role, hydroxymethylglutaryl-CoA synthase; part of the first module of ergosterol biosynthesis pathway that includes the early steps of the pathway, conserved across all eukaryotes, and which results in the formation of mevalonate from acetyl-coenzyme A (acetyl-CoA). Erg13A and erg13B condense acetyl-CoA with acetoacetyl-CoA to form hydroxymethylglutaryl-CoA (HMG-CoA). The first module starts with the action of the cytosolic acetyl-CoA acetyltransferase erg10B that catalyzes the formation of acetoacetyl-CoA. The hydroxymethylglutaryl-CoA synthases erg13A and erg13B then condense acetyl-CoA with acetoacetyl-CoA to form HMG-CoA. The rate-limiting step of the early module is the reduction to mevalonate by the 3-hydroxy-3-methylglutaryl-coenzyme A (HMG-CoA) reductases hmg1 and hmg2. Mevalonate is also a precursor for the extracellular siderophore triacetylfusarinine C (TAFC). The protein is Hydroxymethylglutaryl-CoA synthase erg13B of Aspergillus fumigatus (strain ATCC MYA-4609 / CBS 101355 / FGSC A1100 / Af293) (Neosartorya fumigata).